We begin with the raw amino-acid sequence, 370 residues long: MGILRFVLLISLNLVLFGFKTTVSQPQQQAQVPCLFIFGDSLVDNGNNNRLLSLARANYRPYGIDFPQGTTGRFTNGRTYVDALAQILGFRNYIPPYSRIRGQAILRGANFASGAAGIRDETGDNLGAHTSMNQQVELYTTAVQQMLRYFRGDTNELQRYLSRCIFYSGMGSNDYLNNYFMPDFYSTSTNYNDKTFAESLIKNYTQQLTRLYQFGARKVIVTGVGQIGCIPYQLARYNNRNNSTGRCNEKINNAIVVFNTQVKKLVDRLNKGQLKGAKFVYLDSYKSTYDLAVNGAAYGFEVVDKGCCGVGRNNGQITCLPLQTPCPDRTKYLFWDAFHPTETANILLAKSNFYSRAYTYPINIQELANL.

The signal sequence occupies residues 1-24; the sequence is MGILRFVLLISLNLVLFGFKTTVS. S41 serves as the catalytic Nucleophile. 3 N-linked (GlcNAc...) asparagine glycosylation sites follow: N203, N241, and N242. Residues D336 and H339 contribute to the active site.

Belongs to the 'GDSL' lipolytic enzyme family.

Its subcellular location is the secreted. This Arabidopsis thaliana (Mouse-ear cress) protein is GDSL esterase/lipase At1g33811.